The chain runs to 357 residues: 4-hydroxy-3-methylbut-2-en-1-yl diphosphate synthase (flavodoxin) (357 aa).

[4Fe-4S] cluster is bound by residues cysteine 264, cysteine 267, cysteine 299, and glutamate 306.

This sequence belongs to the IspG family. [4Fe-4S] cluster is required as a cofactor.

It catalyses the reaction (2E)-4-hydroxy-3-methylbut-2-enyl diphosphate + oxidized [flavodoxin] + H2O + 2 H(+) = 2-C-methyl-D-erythritol 2,4-cyclic diphosphate + reduced [flavodoxin]. The protein operates within isoprenoid biosynthesis; isopentenyl diphosphate biosynthesis via DXP pathway; isopentenyl diphosphate from 1-deoxy-D-xylulose 5-phosphate: step 5/6. Functionally, converts 2C-methyl-D-erythritol 2,4-cyclodiphosphate (ME-2,4cPP) into 1-hydroxy-2-methyl-2-(E)-butenyl 4-diphosphate. This chain is 4-hydroxy-3-methylbut-2-en-1-yl diphosphate synthase (flavodoxin), found in Campylobacter jejuni subsp. jejuni serotype O:6 (strain 81116 / NCTC 11828).